Consider the following 85-residue polypeptide: Acyl carrier protein (85 aa).

One can recognise a Carrier domain in the interval 4-79; it reads DELFEKVKEI…NAVNLLSEKL (76 aa). S39 bears the O-(pantetheine 4'-phosphoryl)serine mark.

The protein belongs to the acyl carrier protein (ACP) family. In terms of processing, 4'-phosphopantetheine is transferred from CoA to a specific serine of apo-ACP by AcpS. This modification is essential for activity because fatty acids are bound in thioester linkage to the sulfhydryl of the prosthetic group.

Its subcellular location is the cytoplasm. Its pathway is lipid metabolism; fatty acid biosynthesis. Carrier of the growing fatty acid chain in fatty acid biosynthesis. The chain is Acyl carrier protein from Petrotoga mobilis (strain DSM 10674 / SJ95).